The primary structure comprises 117 residues: Mediator of RNA polymerase II transcription subunit 11 (117 aa).

Ala2 bears the N-acetylalanine mark.

It belongs to the Mediator complex subunit 11 family. As to quaternary structure, component of the Mediator complex, which is composed of MED1, MED4, MED6, MED7, MED8, MED9, MED10, MED11, MED12, MED13, MED13L, MED14, MED15, MED16, MED17, MED18, MED19, MED20, MED21, MED22, MED23, MED24, MED25, MED26, MED27, MED29, MED30, MED31, CCNC, CDK8 and CDC2L6/CDK11. The MED12, MED13, CCNC and CDK8 subunits form a distinct module termed the CDK8 module. Mediator containing the CDK8 module is less active than Mediator lacking this module in supporting transcriptional activation. Individual preparations of the Mediator complex lacking one or more distinct subunits have been variously termed ARC, CRSP, DRIP, PC2, SMCC and TRAP. Expressed in cochlea.

The protein localises to the nucleus. In terms of biological role, component of the Mediator complex, a coactivator involved in the regulated transcription of nearly all RNA polymerase II-dependent genes. Mediator functions as a bridge to convey information from gene-specific regulatory proteins to the basal RNA polymerase II transcription machinery. Mediator is recruited to promoters by direct interactions with regulatory proteins and serves as a scaffold for the assembly of a functional pre-initiation complex with RNA polymerase II and the general transcription factors. In Mus musculus (Mouse), this protein is Mediator of RNA polymerase II transcription subunit 11 (Med11).